A 570-amino-acid chain; its full sequence is Molecular chaperone MKKS (570 aa).

Residue E192–S199 participates in ATP binding. Residues K198–V370 form a substrate-binding apical domain region.

Belongs to the TCP-1 chaperonin family. As to quaternary structure, component of a complex composed at least of MKKS, BBS10, BBS12, TCP1, CCT2, CCT3, CCT4, CCT5 and CCT8. Interacts with STUB1. Interacts with BBS2 (via coiled coil domain). Interacts with CCDC28B. Interacts with BBS12. Interacts with SMARCC1, a component of the SWI/SNF complexes; the interaction takes place predominantly in the cytoplasm and may modulate SMARCC1 location. Interacts with DLEC1. As to expression, widely expressed in adult and fetal tissues. Expressed in the developing heart, brain retina, limb buds, as well as in the developing neural tube. Expressed in the embryo in the first and second branchial arches. Expressed in parafin embedded tissue sections of brain, kidney, retina, olfactory epithelium and the ependymal layer of ventricles. Detected only in restricted regions of these tissue sections, including the ciliated border of renal tubules, the connecting cilium and the inner and outer nuclear layers of retina, and the ciliated layer of olfactory epithelia.

Its subcellular location is the cytoplasm. It is found in the cytoskeleton. It localises to the microtubule organizing center. The protein resides in the centrosome. The protein localises to the cytosol. Its subcellular location is the nucleus. Functionally, probable molecular chaperone that assists the folding of proteins upon ATP hydrolysis. Plays a role in the assembly of BBSome, a complex involved in ciliogenesis regulating transports vesicles to the cilia. May play a role in protein processing in limb, cardiac and reproductive system development. May play a role in cytokinesis. The sequence is that of Molecular chaperone MKKS (Mkks) from Mus musculus (Mouse).